The sequence spans 719 residues: Homeobox protein SIX5 (719 aa).

2 stretches are compositionally biased toward low complexity: residues 1 to 22 (MATS…AAAT) and 31 to 65 (QLLQ…GPGS). Disordered stretches follow at residues 1 to 73 (MATS…VTEV) and 241 to 287 (WFKN…VASM). Positions 194–253 (GEETVYCFKERSRAALKACYRGNRYPTPDEKRRLATLTGLSLTQVSNWFKNRRQRDRTGT) form a DNA-binding region, homeobox. Residues 272 to 282 (ESSRSPEDLER) are compositionally biased toward basic and acidic residues.

This sequence belongs to the SIX/Sine oculis homeobox family. Probably binds DNA dimer. Interacts with EYA3, and probably EYA1 and EYA2.

It localises to the nucleus. Transcription factor that is thought to be involved in regulation of organogenesis. May be involved in determination and maintenance of retina formation. Binds a 5'-GGTGTCAG-3' motif present in the ARE regulatory element of ATP1A1. Binds a 5'-TCA[AG][AG]TTNC-3' motif present in the MEF3 element in the myogenin promoter, and in the IGFBP5 promoter. Thought to be regulated by association with Dach and Eya proteins, and seems to be coactivated by EYA1, EYA2 and EYA3. The chain is Homeobox protein SIX5 (Six5) from Mus musculus (Mouse).